Consider the following 418-residue polypeptide: UDP-N-acetyl-D-mannosamine dehydrogenase (418 aa).

NAD(+) contacts are provided by Y10, I11, D30, T85, and T119. Positions 152, 153, 204, 208, 211, 242, 244, 249, and 255 each coordinate UDP-N-acetyl-alpha-D-mannosaminouronate. The Proton donor/acceptor role is filled by K204. C258 functions as the Nucleophile in the catalytic mechanism. Position 261 (K261) interacts with NAD(+). The UDP-N-acetyl-alpha-D-mannosaminouronate site is built by Y318 and K319. R326 contacts NAD(+). R398 is a binding site for UDP-N-acetyl-alpha-D-mannosaminouronate.

This sequence belongs to the UDP-glucose/GDP-mannose dehydrogenase family. Homodimer.

The catalysed reaction is UDP-N-acetyl-alpha-D-mannosamine + 2 NAD(+) + H2O = UDP-N-acetyl-alpha-D-mannosaminouronate + 2 NADH + 3 H(+). Its function is as follows. Catalyzes the four-electron oxidation of UDP-N-acetyl-D-mannosamine (UDP-ManNAc), reducing NAD(+) and releasing UDP-N-acetylmannosaminuronic acid (UDP-ManNAcA). The sequence is that of UDP-N-acetyl-D-mannosamine dehydrogenase from Pyrococcus horikoshii (strain ATCC 700860 / DSM 12428 / JCM 9974 / NBRC 100139 / OT-3).